Reading from the N-terminus, the 337-residue chain is Ribosomal RNA small subunit methyltransferase H (337 aa).

Residues 45–47 (GGH), Asp64, Phe91, Asp120, and Gln127 each bind S-adenosyl-L-methionine.

The protein belongs to the methyltransferase superfamily. RsmH family.

The protein resides in the cytoplasm. It carries out the reaction cytidine(1402) in 16S rRNA + S-adenosyl-L-methionine = N(4)-methylcytidine(1402) in 16S rRNA + S-adenosyl-L-homocysteine + H(+). In terms of biological role, specifically methylates the N4 position of cytidine in position 1402 (C1402) of 16S rRNA. In Corynebacterium glutamicum (strain R), this protein is Ribosomal RNA small subunit methyltransferase H.